The chain runs to 341 residues: tRNA N6-adenosine threonylcarbamoyltransferase (341 aa).

The Fe cation site is built by histidine 111 and histidine 115. Residues 133–137 (VVSGG), aspartate 166, glycine 179, aspartate 183, and asparagine 271 contribute to the substrate site. A Fe cation-binding site is contributed by aspartate 299.

It belongs to the KAE1 / TsaD family. Fe(2+) is required as a cofactor.

It is found in the cytoplasm. The enzyme catalyses L-threonylcarbamoyladenylate + adenosine(37) in tRNA = N(6)-L-threonylcarbamoyladenosine(37) in tRNA + AMP + H(+). Required for the formation of a threonylcarbamoyl group on adenosine at position 37 (t(6)A37) in tRNAs that read codons beginning with adenine. Is involved in the transfer of the threonylcarbamoyl moiety of threonylcarbamoyl-AMP (TC-AMP) to the N6 group of A37, together with TsaE and TsaB. TsaD likely plays a direct catalytic role in this reaction. The chain is tRNA N6-adenosine threonylcarbamoyltransferase from Fusobacterium nucleatum subsp. nucleatum (strain ATCC 25586 / DSM 15643 / BCRC 10681 / CIP 101130 / JCM 8532 / KCTC 2640 / LMG 13131 / VPI 4355).